An 843-amino-acid polypeptide reads, in one-letter code: MPLSYQHFRKLLLLDDEAGPLEDELPRLADEGLNRRVAEDLNLGNLNVSIPWTHKVGNFTGLYSSTVPVFNPEWQTPSFPHIHLQEDIINRCQQYVGPLTVNEKRRLKLIMPARFYPNLTKYLPLDKGIKPYYPEHAVNHYFKTRHYLHTLWKAGILYKRETTRSASFCGSPYSWEQELQHGRLVFQTSTRHGDESFCSQSSGILSRSPFGPCVRSQLKQSRLGLQPQQGSLAKGKSGQSGSIRARVHPTTLQSFGVEPSGSGHIDNGASSTSSCLLQSAVRKTAYSHLSTFKRQSSSGHAVELHNLPPNSARSQSERPIFPCWWLQFRNSKPCSDYCLSHIVNLLEDWGPCTEHGEHHIRIPRTPARVTGGVFLVDKNPHNTAESRLVVDFSQFSRGNYRVSWPKFAVPNLQSLTNLLSSNLSWLSLDVSAAFYHIPLHPAAMPHLLVGSSGLSRYVARLSSNSRIFNHQHGTLQNLHDSCSRNLYVSLLLLYKTFGRKLHLYSHPIILGFRKIPMGVGLSPFLLAQFTSAICSVVRRAFPHCLAFSYMDDVVLGAKSVQHLESLFTAVTNFLLSLGIHLNPNKTKRWGYSLNFMGYVIGCYGSLPQSHIIQKIKECFRKLPVNRPIDWKVCQRIVGLLGFAAPFTQCGYPALLPLYACIQSKQAFIFSPTYKAFLCQQYMNLYPVARQRPGLCQVFADATPTGWGLVMGHQRMRGTFVAPLPIHTAELLAACFARSRSGANILGTDNSVVLARKYTSFPWLLGCAANWILRGTSFVYVPSALNPADDPSRGRLGLYRPLLHLPFRPTTGRTSLYAVSPSVPSHLPDRVHFASPLHVAWKPP.

Residues 1–177 form a terminal protein domain (TP) region; it reads MPLSYQHFRK…FCGSPYSWEQ (177 aa). Residues 178–346 are spacer; sequence ELQHGRLVFQ…YCLSHIVNLL (169 aa). The interval 347 to 690 is polymerase/reverse transcriptase domain (RT); that stretch reads EDWGPCTEHG…YMNLYPVARQ (344 aa). In terms of domain architecture, Reverse transcriptase spans 357–600; that stretch reads EHHIRIPRTP…YSLNFMGYVI (244 aa). Mg(2+)-binding residues include Asp-429, Asp-551, and Asp-552.

Belongs to the hepadnaviridae P protein family.

It catalyses the reaction DNA(n) + a 2'-deoxyribonucleoside 5'-triphosphate = DNA(n+1) + diphosphate. It carries out the reaction Endonucleolytic cleavage to 5'-phosphomonoester.. Its activity is regulated as follows. Activated by host HSP70 and HSP40 in vitro to be able to bind the epsilon loop of the pgRNA. Because deletion of the RNase H region renders the protein partly chaperone-independent, the chaperones may be needed indirectly to relieve occlusion of the RNA-binding site by this domain. Inhibited by several reverse-transcriptase inhibitors: Lamivudine, Adefovir and Entecavir. In terms of biological role, multifunctional enzyme that converts the viral RNA genome into dsDNA in viral cytoplasmic capsids. This enzyme displays a DNA polymerase activity that can copy either DNA or RNA templates, and a ribonuclease H (RNase H) activity that cleaves the RNA strand of RNA-DNA heteroduplexes in a partially processive 3'- to 5'-endonucleasic mode. Neo-synthesized pregenomic RNA (pgRNA) are encapsidated together with the P protein, and reverse-transcribed inside the nucleocapsid. Initiation of reverse-transcription occurs first by binding the epsilon loop on the pgRNA genome, and is initiated by protein priming, thereby the 5'-end of (-)DNA is covalently linked to P protein. Partial (+)DNA is synthesized from the (-)DNA template and generates the relaxed circular DNA (RC-DNA) genome. After budding and infection, the RC-DNA migrates in the nucleus, and is converted into a plasmid-like covalently closed circular DNA (cccDNA). The activity of P protein does not seem to be necessary for cccDNA generation, and is presumably released from (+)DNA by host nuclear DNA repair machinery. The chain is Protein P from Homo sapiens (Human).